The chain runs to 172 residues: Adenine phosphoribosyltransferase (172 aa).

The protein belongs to the purine/pyrimidine phosphoribosyltransferase family. In terms of assembly, homodimer.

The protein resides in the cytoplasm. It catalyses the reaction AMP + diphosphate = 5-phospho-alpha-D-ribose 1-diphosphate + adenine. The protein operates within purine metabolism; AMP biosynthesis via salvage pathway; AMP from adenine: step 1/1. In terms of biological role, catalyzes a salvage reaction resulting in the formation of AMP, that is energically less costly than de novo synthesis. This chain is Adenine phosphoribosyltransferase, found in Streptococcus equi subsp. zooepidemicus (strain H70).